Here is a 597-residue protein sequence, read N- to C-terminus: MHPPKTPSGALHRKRKMAAWPFSRLWKVSDPILFQMTLIAALLPAVLGNCGPPPTLSFAAPMDITLTETRFKTGTTLKYTCLPGYVRSHSTQTLTCNSDGEWVYNTFCIYKRCRHPGELRNGQVEIKTDLSFGSQIEFSCSEGFFLIGSTTSRCEVQDRGVGWSHPLPQCEIVKCKPPPDIRNGRHSGEENFYAYGFSVTYSCDPRFSLLGHASISCTVENETIGVWRPSPPTCEKITCRKPDVSHGEMVSGFGPIYNYKDTIVFKCQKGFVLRGSSVIHCDADSKWNPSPPACEPNSCINLPDIPHASWETYPRPTKEDVYVVGTVLRYRCHPGYKPTTDEPTTVICQKNLRWTPYQGCEALCCPEPKLNNGEITQHRKSRPANHCVYFYGDEISFSCHETSRFSAICQGDGTWSPRTPSCGDICNFPPKIAHGHYKQSSSYSFFKEEIIYECDKGYILVGQAKLSCSYSHWSAPAPQCKALCRKPELVNGRLSVDKDQYVEPENVTIQCDSGYGVVGPQSITCSGNRTWYPEVPKCEWETPEGCEQVLTGKRLMQCLPNPEDVKMALEVYKLSLEIEQLELQRDSARQSTLDKEL.

A signal peptide spans 1 to 48 (MHPPKTPSGALHRKRKMAAWPFSRLWKVSDPILFQMTLIAALLPAVLG). 8 consecutive Sushi domains span residues 49–110 (NCGP…FCIY), 111–172 (KRCR…QCEI), 173–236 (VKCK…TCEK), 237–296 (ITCR…ACEP), 297–362 (NSCI…GCEA), 363–424 (LCCP…SCGD), 425–482 (ICNF…QCKA), and 483–540 (LCRK…KCEW). Intrachain disulfides connect Cys50/Cys96, Cys81/Cys108, Cys113/Cys154, Cys140/Cys170, Cys175/Cys217, Cys203/Cys234, Cys239/Cys281, Cys267/Cys294, Cys299/Cys348, Cys332/Cys360, Cys365/Cys409, Cys399/Cys422, Cys426/Cys468, Cys454/Cys480, Cys484/Cys525, and Cys511/Cys538. An N-linked (GlcNAc...) asparagine glycan is attached at Asn221. N-linked (GlcNAc...) asparagine glycans are attached at residues Asn506 and Asn528.

In terms of assembly, disulfide-linked complex of alpha and beta chains of 3 possible sorts: a 570 kDa complex of 7 alpha chains and 1 beta chain, a 530 kDa homoheptamer of alpha chains or a 500 kDa complex of 6 alpha chains and 1 beta chain. The central body of the alpha chain homomer supports tentacles, each with the binding site for C4b at the end. As to quaternary structure, (Microbial infection) Interacts with Staphylococcus aureus protein SdrE; this interaction inhibits complement-mediated bacterial opsonization. In terms of tissue distribution, chylomicrons in the plasma.

It is found in the secreted. Functionally, controls the classical pathway of complement activation. It binds as a cofactor to C3b/C4b inactivator (C3bINA), which then hydrolyzes the complement fragment C4b. It also accelerates the degradation of the C4bC2a complex (C3 convertase) by dissociating the complement fragment C2a. Alpha chain binds C4b. It also interacts with anticoagulant protein S and with serum amyloid P component. This is C4b-binding protein alpha chain (C4BPA) from Homo sapiens (Human).